The following is a 400-amino-acid chain: Phosphoglycerate kinase (400 aa).

Residues 22–24 (DFN), R38, 61–64 (HLGR), R119, and R152 each bind substrate. Residues K205, G296, E327, and 353–356 (GGDT) each bind ATP.

This sequence belongs to the phosphoglycerate kinase family. Monomer.

The protein localises to the cytoplasm. It carries out the reaction (2R)-3-phosphoglycerate + ATP = (2R)-3-phospho-glyceroyl phosphate + ADP. Its pathway is carbohydrate degradation; glycolysis; pyruvate from D-glyceraldehyde 3-phosphate: step 2/5. This is Phosphoglycerate kinase from Campylobacter jejuni subsp. doylei (strain ATCC BAA-1458 / RM4099 / 269.97).